Reading from the N-terminus, the 119-residue chain is Putative F-box protein At2g39415 (119 aa).

The F-box domain maps to 37–92 (IDSISSLPDVILQQILSSLPTNLAIRTSVLSTRWRHVWSDTPYIYFDGPGTLYRGL).

This chain is Putative F-box protein At2g39415, found in Arabidopsis thaliana (Mouse-ear cress).